We begin with the raw amino-acid sequence, 415 residues long: Glucose-6-phosphate isomerase (415 aa).

The active-site Proton donor is Glu-267. Catalysis depends on residues His-293 and Lys-406.

This sequence belongs to the GPI family.

Its subcellular location is the cytoplasm. It catalyses the reaction alpha-D-glucose 6-phosphate = beta-D-fructose 6-phosphate. The protein operates within carbohydrate biosynthesis; gluconeogenesis. It functions in the pathway carbohydrate degradation; glycolysis; D-glyceraldehyde 3-phosphate and glycerone phosphate from D-glucose: step 2/4. Catalyzes the reversible isomerization of glucose-6-phosphate to fructose-6-phosphate. The chain is Glucose-6-phosphate isomerase from Thermus thermophilus (strain ATCC 27634 / DSM 579 / HB8).